A 198-amino-acid chain; its full sequence is Phosphoheptose isomerase (198 aa).

The region spanning 34–196 is the SIS domain; it reads IVEALIRGNK…DDSLFPADHG (163 aa). 49–51 contributes to the substrate binding site; it reads NGG. Zn(2+)-binding residues include histidine 58 and asparagine 62. Residues asparagine 62, 91-92, 117-119, serine 122, and glutamine 172 each bind substrate; these read ND and STS. Glutamine 172 and histidine 180 together coordinate Zn(2+).

It belongs to the SIS family. GmhA subfamily. Homotetramer. Zn(2+) is required as a cofactor.

It localises to the cytoplasm. The catalysed reaction is 2 D-sedoheptulose 7-phosphate = D-glycero-alpha-D-manno-heptose 7-phosphate + D-glycero-beta-D-manno-heptose 7-phosphate. It functions in the pathway carbohydrate biosynthesis; D-glycero-D-manno-heptose 7-phosphate biosynthesis; D-glycero-alpha-D-manno-heptose 7-phosphate and D-glycero-beta-D-manno-heptose 7-phosphate from sedoheptulose 7-phosphate: step 1/1. Its function is as follows. Catalyzes the isomerization of sedoheptulose 7-phosphate in D-glycero-D-manno-heptose 7-phosphate. The sequence is that of Phosphoheptose isomerase from Alteromonas mediterranea (strain DSM 17117 / CIP 110805 / LMG 28347 / Deep ecotype).